Consider the following 433-residue polypeptide: MRAEARGGLERFCSAGKGRGLRALRPFHVGDLLFSCPAYACVLTVGERGHHCECCFARKEGLSKCGRCKQAFYCDVECQKEDWPLHKLECSSMVVLGENWNPSETVRLTARILAKQKIHPERTPSEKLLAVREFESHLDKLDNEKKDLIQSDIAALHQFYSKYLEFPDHSSLVVLFAQVNCNGFTIEDEELSHLGSAIFPDVALMNHSCCPNVIVTYKGTLAEVRAVQEIHPGDEVFTSYIDLLYPTEDRNDRLRDSYFFTCECRECTTKDKDKAKVEVRKLSSPPQAEAIRDMVRYARNVIEEFRRAKHYKSPSELLEICELSQEKMSSVFEDSNVYMLHMMYQAMGVCLYMQDWEGALKYGQKIIKPYSKHYPVYSLNVASMWLKLGRLYMGLENKAAGEKALKKAIAIMEVAHGKDHPYISEIKQEIESH.

An SET domain is found at 7–241 (GGLERFCSAG…PGDEVFTSYI (235 aa)). 17-19 (KGR) is an S-adenosyl-L-methionine binding site. Residues Cys52, Cys55, Cys65, Cys68, Cys74, Cys78, His86, and Cys90 each contribute to the Zn(2+) site. The MYND-type zinc-finger motif lies at 52–90 (CECCFARKEGLSKCGRCKQAFYCDVECQKEDWPLHKLEC). Residues His137, 206-207 (NH), and 258-260 (YFF) contribute to the S-adenosyl-L-methionine site. Ser283 is subject to Phosphoserine.

It belongs to the class V-like SAM-binding methyltransferase superfamily. Interacts (via MYND-type zinc finger) with EPB41L3. Interacts (via SET domain) with p53/TP53. Interacts with RB1 and HSP90AA1. Interacts with RNA polymerase II and HELZ. Interacts with SIN3A and HDAC1. In terms of tissue distribution, highly expressed in heart, skeletal muscle and brain tissue. During cardiac development, it is differentially expressed with highest expression in the neonatal heart while very low expression is detected at 12.5 dpc and adult. Specifically expressed in cardiomyocytes (at protein level).

Its subcellular location is the cytoplasm. It is found in the cytosol. The protein resides in the nucleus. It carries out the reaction L-lysyl(4)-[histone H3] + 3 S-adenosyl-L-methionine = N(6),N(6),N(6)-trimethyl-L-lysyl(4)-[histone H3] + 3 S-adenosyl-L-homocysteine + 3 H(+). It catalyses the reaction L-lysyl-[protein] + S-adenosyl-L-methionine = N(6)-methyl-L-lysyl-[protein] + S-adenosyl-L-homocysteine + H(+). Protein-lysine N-methyltransferase that methylates both histones and non-histone proteins, including p53/TP53 and RB1. Specifically trimethylates histone H3 'Lys-4' (H3K4me3) in vivo. The activity requires interaction with HSP90alpha. Shows even higher methyltransferase activity on p53/TP53. Monomethylates 'Lys-370' of p53/TP53, leading to decreased DNA-binding activity and subsequent transcriptional regulation activity of p53/TP53. Monomethylates RB1 at 'Lys-860'. The chain is N-lysine methyltransferase SMYD2 (Smyd2) from Mus musculus (Mouse).